A 233-amino-acid chain; its full sequence is Uridylate kinase (233 aa).

9–10 contributes to the ATP binding site; the sequence is GS. G43 provides a ligand contact to UMP. 2 residues coordinate ATP: G44 and R48. Residues D65 and 113–119 contribute to the UMP site; that span reads VTPGQTT. T139, Y145, and D148 together coordinate ATP.

The protein belongs to the UMP kinase family. In terms of assembly, homohexamer.

Its subcellular location is the cytoplasm. It carries out the reaction UMP + ATP = UDP + ADP. Its pathway is pyrimidine metabolism; CTP biosynthesis via de novo pathway; UDP from UMP (UMPK route): step 1/1. Inhibited by UTP. Catalyzes the reversible phosphorylation of UMP to UDP. This Methanosarcina barkeri (strain Fusaro / DSM 804) protein is Uridylate kinase.